Here is an 81-residue protein sequence, read N- to C-terminus: Cytotoxin 1a (81 aa).

The signal sequence occupies residues 1–21 (MKTLLLTLVVVTIVCLDLGYT). Disulfide bonds link C24-C42, C35-C59, C63-C74, and C75-C80.

Belongs to the three-finger toxin family. Short-chain subfamily. Type IA cytotoxin sub-subfamily. As to quaternary structure, monomer in solution; Homodimer and oligomer in the presence of negatively charged lipids forming a pore with a size ranging between 20 and 30 Angstroms. Expressed by the venom gland.

Its subcellular location is the secreted. The protein resides in the target cell membrane. Shows cytolytic activity on many different cells by forming pore in lipid membranes. In vivo, increases heart rate or kills the animal by cardiac arrest. In addition, it binds to heparin with high affinity, interacts with Kv channel-interacting protein 1 (KCNIP1) in a calcium-independent manner, and binds to integrin alpha-V/beta-3 (ITGAV/ITGB3) with moderate affinity. The chain is Cytotoxin 1a from Naja atra (Chinese cobra).